We begin with the raw amino-acid sequence, 201 residues long: Recombination protein RecR (201 aa).

The C4-type zinc-finger motif lies at 60-75 (CSVCGNVDTTDPCSIC). Positions 83–178 (TTIIVVEDVA…KITRLAHGVP (96 aa)) constitute a Toprim domain.

It belongs to the RecR family.

Functionally, may play a role in DNA repair. It seems to be involved in an RecBC-independent recombinational process of DNA repair. It may act with RecF and RecO. The polypeptide is Recombination protein RecR (Bartonella quintana (strain Toulouse) (Rochalimaea quintana)).